A 44-amino-acid chain; its full sequence is MKMKYGLYCMGSLVNTYDDAIEAHNDAVYAQEESGVPHEVREIQ.

The protein is SPbeta prophage-derived uncharacterized protein YosI (yosI) of Bacillus subtilis (strain 168).